We begin with the raw amino-acid sequence, 445 residues long: METIFAQSSSFGKAGVAVFRVSGTKSLEVLKLLTGKSNFKPRFMYYQKLTSPESNDLIDNAMVVYFKAPNSFTGEDVVEIHTHGSKAISIMLTNALLNIPGVRLAEAGEFTKRAFLNNKFDLTAAEGIADLINAETIMQHKQAIRQAGGALEELYNSWRSQLLRIISLLEAYIDFPDEDIPESVLKDVTNTHKTLINTISEYLNDNRKGELLRSGLKLAIIGPPNAGKSSLLNFLMRRDIAIVSNIAGTTRDIIEGHLDIGGYPIILQDTAGIRGESNDVIEQEGIKRAIDSAKKADIKIVMFDAETLDSAVNEDITGLIDENTIVIINKIDLIPENRIFNIENKYRCLKVSIKNNIALPSILKNIEEIAENMAGFTETPYITNERHRHHLKQALVYLKDFNLDNDLVLATEDIRMTMRRIGAITGIIDVEEILGEIFKNFCIGK.

Residues Arg20, Glu79, and Lys119 each coordinate (6S)-5-formyl-5,6,7,8-tetrahydrofolate. One can recognise a TrmE-type G domain in the interval 215–371; that stretch reads GLKLAIIGPP…ILKNIEEIAE (157 aa). Asn225 serves as a coordination point for K(+). GTP contacts are provided by residues 225-230, 244-250, and 269-272; these read NAGKSS, SNIAGTT, and DTAG. Ser229 contributes to the Mg(2+) binding site. The K(+) site is built by Ser244, Ile246, and Thr249. Residue Thr250 participates in Mg(2+) binding. A (6S)-5-formyl-5,6,7,8-tetrahydrofolate-binding site is contributed by Lys445.

Belongs to the TRAFAC class TrmE-Era-EngA-EngB-Septin-like GTPase superfamily. TrmE GTPase family. As to quaternary structure, homodimer. Heterotetramer of two MnmE and two MnmG subunits. It depends on K(+) as a cofactor.

Its subcellular location is the cytoplasm. Exhibits a very high intrinsic GTPase hydrolysis rate. Involved in the addition of a carboxymethylaminomethyl (cmnm) group at the wobble position (U34) of certain tRNAs, forming tRNA-cmnm(5)s(2)U34. The chain is tRNA modification GTPase MnmE from Rickettsia bellii (strain RML369-C).